The sequence spans 359 residues: 3-dehydroquinate synthase (359 aa).

NAD(+)-binding positions include 71–76 (DGEQYK), 105–109 (GVIGD), 129–130 (TT), Lys142, Lys151, and 169–172 (CLST). Residues Glu184, His247, and His264 each coordinate Zn(2+).

This sequence belongs to the sugar phosphate cyclases superfamily. Dehydroquinate synthase family. Co(2+) is required as a cofactor. Requires Zn(2+) as cofactor. The cofactor is NAD(+).

It is found in the cytoplasm. It carries out the reaction 7-phospho-2-dehydro-3-deoxy-D-arabino-heptonate = 3-dehydroquinate + phosphate. It functions in the pathway metabolic intermediate biosynthesis; chorismate biosynthesis; chorismate from D-erythrose 4-phosphate and phosphoenolpyruvate: step 2/7. Catalyzes the conversion of 3-deoxy-D-arabino-heptulosonate 7-phosphate (DAHP) to dehydroquinate (DHQ). This is 3-dehydroquinate synthase from Shewanella pealeana (strain ATCC 700345 / ANG-SQ1).